We begin with the raw amino-acid sequence, 254 residues long: Anamorsin homolog (254 aa).

The tract at residues 4 to 133 (VQENNHVLYL…EVGSKSKLSF (130 aa)) is N-terminal SAM-like domain. Positions 134-165 (AKKSNVAAVWKLDDNEEEERIDDEELLDEDDK) are linker. Positions 176, 185, 188, and 190 each coordinate [2Fe-2S] cluster. The segment at 176–190 (CGTTGKRKACKDCSC) is fe-S binding site A. The [4Fe-4S] cluster site is built by Cys-215, Cys-218, Cys-226, and Cys-229. 2 consecutive short sequence motifs (cx2C motif) follow at residues 215–218 (CGSC) and 226–229 (CATC). The segment at 215 to 229 (CGSCYLGDAFRCATC) is fe-S binding site B.

This sequence belongs to the anamorsin family. As to quaternary structure, monomer. [2Fe-2S] cluster is required as a cofactor. It depends on [4Fe-4S] cluster as a cofactor.

Its subcellular location is the cytoplasm. The protein localises to the mitochondrion intermembrane space. Functionally, component of the cytosolic iron-sulfur (Fe-S) protein assembly (CIA) machinery. Required for the maturation of extramitochondrial Fe-S proteins. Part of an electron transfer chain functioning in an early step of cytosolic Fe-S biogenesis, facilitating the de novo assembly of a [4Fe-4S] cluster on the cytosolic Fe-S scaffold complex. Electrons are transferred from NADPH via a FAD- and FMN-containing diflavin oxidoreductase. Together with the diflavin oxidoreductase, also required for the assembly of the diferric tyrosyl radical cofactor of ribonucleotide reductase (RNR), probably by providing electrons for reduction during radical cofactor maturation in the catalytic small subunit. The protein is Anamorsin homolog of Anopheles gambiae (African malaria mosquito).